Consider the following 147-residue polypeptide: Small ribosomal subunit protein uS12 (147 aa).

It belongs to the universal ribosomal protein uS12 family. Part of the 30S ribosomal subunit.

In terms of biological role, with S4 and S5 plays an important role in translational accuracy. Located at the interface of the 30S and 50S subunits. The sequence is that of Small ribosomal subunit protein uS12 from Methanococcus vannielii (strain ATCC 35089 / DSM 1224 / JCM 13029 / OCM 148 / SB).